A 411-amino-acid polypeptide reads, in one-letter code: Gamma-glutamyl phosphate reductase (411 aa).

Belongs to the gamma-glutamyl phosphate reductase family.

It localises to the cytoplasm. The catalysed reaction is L-glutamate 5-semialdehyde + phosphate + NADP(+) = L-glutamyl 5-phosphate + NADPH + H(+). The protein operates within amino-acid biosynthesis; L-proline biosynthesis; L-glutamate 5-semialdehyde from L-glutamate: step 2/2. Its function is as follows. Catalyzes the NADPH-dependent reduction of L-glutamate 5-phosphate into L-glutamate 5-semialdehyde and phosphate. The product spontaneously undergoes cyclization to form 1-pyrroline-5-carboxylate. This chain is Gamma-glutamyl phosphate reductase, found in Wolinella succinogenes (strain ATCC 29543 / DSM 1740 / CCUG 13145 / JCM 31913 / LMG 7466 / NCTC 11488 / FDC 602W) (Vibrio succinogenes).